Consider the following 217-residue polypeptide: Peroxiredoxin Q, chloroplastic (217 aa).

The transit peptide at 1-65 (MAAICLPVAK…PPPSYSARIS (65 aa)) directs the protein to the chloroplast. The Thioredoxin domain occupies 70-217 (VSKGSVPPQF…DETLKFLQSA (148 aa)). Cys112 functions as the Cysteine sulfenic acid (-SOH) intermediate in the catalytic mechanism. Cys112 and Cys117 form a disulfide bridge.

The protein belongs to the peroxiredoxin family. BCP/PrxQ subfamily. As to quaternary structure, monomer. As to expression, expressed in the leaves, roots and stems.

It is found in the plastid. The protein localises to the chloroplast thylakoid lumen. It catalyses the reaction a hydroperoxide + [thioredoxin]-dithiol = an alcohol + [thioredoxin]-disulfide + H2O. Thiol-specific peroxidase that catalyzes the reduction of hydrogen peroxide and organic hydroperoxides to water and alcohols, respectively. Plays a role in cell protection against oxidative stress by detoxifying peroxides. Involved in both resistance against fungal disease and oxidative stress. In Gentiana triflora (Clustered gentian), this protein is Peroxiredoxin Q, chloroplastic (AFP1).